A 619-amino-acid chain; its full sequence is Chaperone protein HscA homolog (619 aa).

It belongs to the heat shock protein 70 family.

Its function is as follows. Chaperone involved in the maturation of iron-sulfur cluster-containing proteins. Has a low intrinsic ATPase activity which is markedly stimulated by HscB. The chain is Chaperone protein HscA homolog from Pseudomonas aeruginosa (strain UCBPP-PA14).